The sequence spans 171 residues: MKVYKDVFTNDEVCSDSYNQEDPFGIADFREIAFEVKSNKRIKGNDDYGIADNSEEAVDGMGADVEQVIDIVDSFQLTSTSLSKKEYSVYIKNYMQKILKYLEEKKPDRVDVFKTKAQPLIKHILTNFDDFEFYMGESLDMDAGLTYSYYKGEEVTPRFVYISDGLYEEKF.

A TCTP domain is found at Met1–Phe171.

It belongs to the TCTP family.

The protein localises to the cytoplasm. Its function is as follows. Involved in calcium binding and microtubule stabilization. The sequence is that of Translationally-controlled tumor protein homolog (TCTP) from Plasmodium knowlesi.